The sequence spans 341 residues: Glycerol-3-phosphate dehydrogenase [NAD(P)+] 1 (341 aa).

NADPH contacts are provided by serine 17, tryptophan 18, arginine 37, and lysine 112. Sn-glycerol 3-phosphate contacts are provided by lysine 112 and glycine 140. NADPH is bound at residue alanine 144. Sn-glycerol 3-phosphate is bound by residues lysine 195, aspartate 248, serine 258, arginine 259, and asparagine 260. Residue lysine 195 is the Proton acceptor of the active site. Arginine 259 is an NADPH binding site. NADPH contacts are provided by valine 283 and glutamate 285.

It belongs to the NAD-dependent glycerol-3-phosphate dehydrogenase family.

The protein localises to the cytoplasm. It carries out the reaction sn-glycerol 3-phosphate + NAD(+) = dihydroxyacetone phosphate + NADH + H(+). The enzyme catalyses sn-glycerol 3-phosphate + NADP(+) = dihydroxyacetone phosphate + NADPH + H(+). It participates in membrane lipid metabolism; glycerophospholipid metabolism. In terms of biological role, catalyzes the reduction of the glycolytic intermediate dihydroxyacetone phosphate (DHAP) to sn-glycerol 3-phosphate (G3P), the key precursor for phospholipid synthesis. In Mycobacterium bovis (strain ATCC BAA-935 / AF2122/97), this protein is Glycerol-3-phosphate dehydrogenase [NAD(P)+] 1.